Reading from the N-terminus, the 158-residue chain is Transcription elongation factor GreA (158 aa).

The protein belongs to the GreA/GreB family.

Functionally, necessary for efficient RNA polymerase transcription elongation past template-encoded arresting sites. The arresting sites in DNA have the property of trapping a certain fraction of elongating RNA polymerases that pass through, resulting in locked ternary complexes. Cleavage of the nascent transcript by cleavage factors such as GreA or GreB allows the resumption of elongation from the new 3'terminus. GreA releases sequences of 2 to 3 nucleotides. This chain is Transcription elongation factor GreA, found in Polaromonas naphthalenivorans (strain CJ2).